We begin with the raw amino-acid sequence, 130 residues long: Ribonuclease P protein component 2 (130 aa).

It belongs to the eukaryotic/archaeal RNase P protein component 2 family. As to quaternary structure, consists of a catalytic RNA component and at least 4-5 protein subunits.

It localises to the cytoplasm. It carries out the reaction Endonucleolytic cleavage of RNA, removing 5'-extranucleotides from tRNA precursor.. Its function is as follows. Part of ribonuclease P, a protein complex that generates mature tRNA molecules by cleaving their 5'-ends. The polypeptide is Ribonuclease P protein component 2 (Methanococcus maripaludis (strain C5 / ATCC BAA-1333)).